We begin with the raw amino-acid sequence, 157 residues long: Transcriptional regulator AzlB (157 aa).

The HTH asnC-type domain maps to 5 to 66 (LDETDKAILR…IVDEKKLGIE (62 aa)). Positions 24-43 (NLNLSKKIGLSPSACLARTK) form a DNA-binding region, H-T-H motif.

Transcriptional repressor of the azlBCD operon involved in branched-chain amino acid transport. The polypeptide is Transcriptional regulator AzlB (azlB) (Bacillus subtilis (strain 168)).